Reading from the N-terminus, the 131-residue chain is Probable ATP synthase subunit g 2, mitochondrial (131 aa).

Belongs to the ATPase g subunit family. Subunit of the F-type ATPase which has 2 components, CF(1) - the catalytic core - and CF(0) - the membrane proton channel.

It localises to the mitochondrion membrane. Functionally, mitochondrial membrane ATP synthase (F(1)F(0) ATP synthase or Complex V) produces ATP from ADP in the presence of a proton gradient across the membrane which is generated by electron transport complexes of the respiratory chain. F-type ATPases consist of two structural domains, F(1) - containing the extramembraneous catalytic core, and F(0) - containing the membrane proton channel, linked together by a central stalk and a peripheral stalk. During catalysis, ATP synthesis in the catalytic domain of F(1) is coupled via a rotary mechanism of the central stalk subunits to proton translocation. Part of the complex F(0) domain. Minor subunit located with subunit a in the membrane. The protein is Probable ATP synthase subunit g 2, mitochondrial of Caenorhabditis elegans.